The primary structure comprises 398 residues: L-talarate/galactarate dehydratase (398 aa).

Residues 46–48 (DAK), 82–83 (KR), and Lys195 each bind substrate. The active-site Proton acceptor is the Lys197. Asp226 provides a ligand contact to Mg(2+). Asn228 is a substrate binding site. Residues Glu252 and Glu278 each coordinate Mg(2+). His328 acts as the Proton donor/acceptor in catalysis. A substrate-binding site is contributed by Glu348.

It belongs to the mandelate racemase/muconate lactonizing enzyme family. Homooctamer; tetramer of dimers. The cofactor is Mg(2+).

The catalysed reaction is L-altrarate = 5-dehydro-4-deoxy-D-glucarate + H2O. The enzyme catalyses galactarate = 5-dehydro-4-deoxy-D-glucarate + H2O. It catalyses the reaction L-altrarate = galactarate. With respect to regulation, competitively inhibited by tartronate. Functionally, catalyzes the efficient dehydration of both L-talarate (also called L-altrarate) and galactarate to 5-keto-4-deoxy-D-glucarate (5-KDG). Also catalyzes the epimerization of L-talarate to galactarate; epimerization occurs in competition with dehydration. Is required for the utilization of L-talarate as a carbon source. Also functions in galactarate utilization. Is not active on other acid sugars. This chain is L-talarate/galactarate dehydratase, found in Salmonella typhimurium (strain LT2 / SGSC1412 / ATCC 700720).